The primary structure comprises 313 residues: GTP cyclohydrolase MptA (313 aa).

Belongs to the GTP cyclohydrolase IV family. As to quaternary structure, homodimer. The cofactor is Fe(2+).

The enzyme catalyses GTP + H2O = 7,8-dihydroneopterin 2',3'-cyclic phosphate + formate + diphosphate + H(+). It participates in cofactor biosynthesis; 5,6,7,8-tetrahydromethanopterin biosynthesis. In terms of biological role, converts GTP to 7,8-dihydro-D-neopterin 2',3'-cyclic phosphate, the first intermediate in the biosynthesis of coenzyme methanopterin. This chain is GTP cyclohydrolase MptA, found in Methanosphaera stadtmanae (strain ATCC 43021 / DSM 3091 / JCM 11832 / MCB-3).